The sequence spans 367 residues: Sigma54-dependent transcriptional regulator SfnR (367 aa).

The region spanning 21 to 250 is the Sigma-54 factor interaction domain; the sequence is QVFEDPKSQA…LENVIHHTLL (230 aa). ATP-binding positions include 49–56 and 112–121; these read GETGTGKE and ADGGTLFLDE.

Its function is as follows. Involved in the dimethyl sulfide degradation pathway. Activates the expression of sfnG and sfnF. The chain is Sigma54-dependent transcriptional regulator SfnR from Pseudomonas fluorescens (strain Pf0-1).